The chain runs to 466 residues: Membrane-bound lytic murein transglycosylase F (466 aa).

The N-terminal stretch at 1-24 is a signal peptide; the sequence is MKRFKLNYFIIGLIAILLTWSLWT. The segment at 25 to 268 is non-LT domain; the sequence is TVPWRNAHQD…RLEEKYLGHV (244 aa). The tract at residues 269 to 466 is LT domain; the sequence is GGFDYVDTKT…KEKKAAQLAD (198 aa). Glu313 is a catalytic residue.

In the N-terminal section; belongs to the bacterial solute-binding protein 3 family. It in the C-terminal section; belongs to the transglycosylase Slt family.

It localises to the cell outer membrane. The catalysed reaction is Exolytic cleavage of the (1-&gt;4)-beta-glycosidic linkage between N-acetylmuramic acid (MurNAc) and N-acetylglucosamine (GlcNAc) residues in peptidoglycan, from either the reducing or the non-reducing ends of the peptidoglycan chains, with concomitant formation of a 1,6-anhydrobond in the MurNAc residue.. Murein-degrading enzyme that degrades murein glycan strands and insoluble, high-molecular weight murein sacculi, with the concomitant formation of a 1,6-anhydromuramoyl product. Lytic transglycosylases (LTs) play an integral role in the metabolism of the peptidoglycan (PG) sacculus. Their lytic action creates space within the PG sacculus to allow for its expansion as well as for the insertion of various structures such as secretion systems and flagella. This chain is Membrane-bound lytic murein transglycosylase F, found in Sodalis glossinidius (strain morsitans).